Reading from the N-terminus, the 244-residue chain is Phosphoadenosine 5'-phosphosulfate reductase (244 aa).

Catalysis depends on Cys239, which acts as the Nucleophile; cysteine thiosulfonate intermediate.

Belongs to the PAPS reductase family. CysH subfamily.

The protein resides in the cytoplasm. The enzyme catalyses [thioredoxin]-disulfide + sulfite + adenosine 3',5'-bisphosphate + 2 H(+) = [thioredoxin]-dithiol + 3'-phosphoadenylyl sulfate. The protein operates within sulfur metabolism; hydrogen sulfide biosynthesis; sulfite from sulfate: step 3/3. Catalyzes the formation of sulfite from phosphoadenosine 5'-phosphosulfate (PAPS) using thioredoxin as an electron donor. This Buchnera aphidicola subsp. Acyrthosiphon pisum (strain Tuc7) protein is Phosphoadenosine 5'-phosphosulfate reductase.